The primary structure comprises 388 residues: Protochlorophyllide reductase A, chloroplastic (388 aa).

The N-terminal 74 residues, 1–74, are a transit peptide targeting the chloroplast; the sequence is MALQLLPSTL…KPSGKKTLRQ (74 aa).

Belongs to the short-chain dehydrogenases/reductases (SDR) family. POR subfamily.

It is found in the plastid. The protein localises to the chloroplast. The catalysed reaction is chlorophyllide a + NADP(+) = protochlorophyllide a + NADPH + H(+). It participates in porphyrin-containing compound metabolism; chlorophyll biosynthesis. Functionally, phototransformation of protochlorophyllide (Pchlide) to chlorophyllide (Chlide). The sequence is that of Protochlorophyllide reductase A, chloroplastic (PORA) from Triticum aestivum (Wheat).